The following is a 272-amino-acid chain: Nitrogenase iron protein (272 aa).

8 to 15 serves as a coordination point for ATP; the sequence is GKGGIGKS. Cys94 is a binding site for [4Fe-4S] cluster. The residue at position 97 (Arg97) is an ADP-ribosylarginine; by dinitrogenase reductase ADP-ribosyltransferase. [4Fe-4S] cluster is bound at residue Cys129.

It belongs to the NifH/BchL/ChlL family. In terms of assembly, homodimer. It depends on [4Fe-4S] cluster as a cofactor. The reversible ADP-ribosylation of Arg-97 inactivates the nitrogenase reductase and regulates nitrogenase activity.

The catalysed reaction is N2 + 8 reduced [2Fe-2S]-[ferredoxin] + 16 ATP + 16 H2O = H2 + 8 oxidized [2Fe-2S]-[ferredoxin] + 2 NH4(+) + 16 ADP + 16 phosphate + 6 H(+). Functionally, the key enzymatic reactions in nitrogen fixation are catalyzed by the nitrogenase complex, which has 2 components: the iron protein and the molybdenum-iron protein. The polypeptide is Nitrogenase iron protein (Clostridium acetobutylicum (strain ATCC 824 / DSM 792 / JCM 1419 / IAM 19013 / LMG 5710 / NBRC 13948 / NRRL B-527 / VKM B-1787 / 2291 / W)).